Consider the following 370-residue polypeptide: DNA replication and repair protein RecF (370 aa).

30–37 (GDNGSGKT) is an ATP binding site.

The protein belongs to the RecF family.

The protein localises to the cytoplasm. Functionally, the RecF protein is involved in DNA metabolism; it is required for DNA replication and normal SOS inducibility. RecF binds preferentially to single-stranded, linear DNA. It also seems to bind ATP. The protein is DNA replication and repair protein RecF of Stutzerimonas stutzeri (strain A1501) (Pseudomonas stutzeri).